The following is a 513-amino-acid chain: MTDTSASPPSAPSAPSAPSAAAAQAVVPAPKLTLHWGLFAAVAALLVVLAIPQPEGLTVAGQRMLAILAFAIVVWITEAVSYETSAIMITSLMAGLIGFAPTVNDPSVQYGTSKALGMALAGFSNTALALVAAALFISAAMTVTGLDRRIALVTLSAIGTSTRRILIGTIAVTIALSLVVPSATARSACVVPIMMGVIAAFGVDKKSNIAAGIMITVAQATSIWNVGIQTAAAQNLLTVGFMDKLLGERITWLQWLIAGAPWAIAMSVVLYFLVRLLLPAETDAIPGGKEAVQRELSALGPMSAPQKRLAAVSLGLLLFWATEGKLHSFDTATVTFVGLVILMMPRIGVMDWKTMQQRTPWGTLIVFGVGISLGTALLSTNAGQWLGQFVVTHSGLAAHGALLVFAILSAFLILIHLGFASATALTAALLPILIAVLQTLPGDINRVGMTMLLGFTVSFGFILPINAPQNMVCLGTETFNGRQFARIGIPVTIIGYAMMLLFAATYWRWLGWV.

Tandem repeats lie at residues 9-11 (PSA), 12-14 (PSA), 15-17 (PSA), and 18-20 (PSA). Residues 9 to 20 (PSAPSAPSAPSA) are 4 X 3 AA tandem repeats of P-S-A. The next 14 membrane-spanning stretches (helical) occupy residues 32–52 (LTLHWGLFAAVAALLVVLAIP), 56–76 (GLTVAGQRMLAILAFAIVVWI), 79–99 (AVSYETSAIMITSLMAGLIGF), 126–146 (TALALVAAALFISAAMTVTGL), 165–185 (ILIGTIAVTIALSLVVPSATA), 208–228 (NIAAGIMITVAQATSIWNVGI), 254–274 (QWLIAGAPWAIAMSVVLYFLV), 309–329 (LAAVSLGLLLFWATEGKLHSF), 332–352 (ATVTFVGLVILMMPRIGVMDW), 360–380 (PWGTLIVFGVGISLGTALLST), 400–420 (GALLVFAILSAFLILIHLGFA), 422–442 (ATALTAALLPILIAVLQTLPG), 447–467 (VGMTMLLGFTVSFGFILPINA), and 487–507 (IGIPVTIIGYAMMLLFAATYW).

The protein belongs to the SLC13A/DASS transporter (TC 2.A.47) family. DIT1 subfamily.

It is found in the cell membrane. The polypeptide is Membrane protein (Cupriavidus necator (strain ATCC 17699 / DSM 428 / KCTC 22496 / NCIMB 10442 / H16 / Stanier 337) (Ralstonia eutropha)).